We begin with the raw amino-acid sequence, 455 residues long: Protein png1 (455 aa).

The tract at residues Met1–Asp110 is disordered. Positions Ser38–Ser53 are enriched in low complexity. Residues His59–Thr73 are compositionally biased toward pro residues. The segment covering Gly74–Leu98 has biased composition (low complexity). Zn(2+) contacts are provided by Cys199, Cys202, Cys231, and Cys236. The tract at residues Asn408 to Arg455 is disordered.

This sequence belongs to the transglutaminase-like superfamily. PNGase family.

This Aspergillus fumigatus (strain ATCC MYA-4609 / CBS 101355 / FGSC A1100 / Af293) (Neosartorya fumigata) protein is Protein png1 (png1).